Consider the following 216-residue polypeptide: LexA repressor (216 aa).

Positions 28-48 (RAEIAAEFGFSSPNAAEEHLR) form a DNA-binding region, H-T-H motif. Catalysis depends on for autocatalytic cleavage activity residues serine 134 and lysine 171.

It belongs to the peptidase S24 family. As to quaternary structure, homodimer.

The catalysed reaction is Hydrolysis of Ala-|-Gly bond in repressor LexA.. Functionally, represses a number of genes involved in the response to DNA damage (SOS response), including recA and lexA. In the presence of single-stranded DNA, RecA interacts with LexA causing an autocatalytic cleavage which disrupts the DNA-binding part of LexA, leading to derepression of the SOS regulon and eventually DNA repair. In Ralstonia nicotianae (strain ATCC BAA-1114 / GMI1000) (Ralstonia solanacearum), this protein is LexA repressor.